The following is a 344-amino-acid chain: Arginine N-succinyltransferase (344 aa).

Residue Leu-125 participates in succinyl-CoA binding. The Proton donor role is filled by His-229.

This sequence belongs to the arginine N-succinyltransferase family.

The catalysed reaction is succinyl-CoA + L-arginine = N(2)-succinyl-L-arginine + CoA + H(+). It functions in the pathway amino-acid degradation; L-arginine degradation via AST pathway; L-glutamate and succinate from L-arginine: step 1/5. Catalyzes the transfer of succinyl-CoA to arginine to produce N(2)-succinylarginine. The chain is Arginine N-succinyltransferase from Escherichia coli O127:H6 (strain E2348/69 / EPEC).